The sequence spans 459 residues: Transcriptional coactivator YAP1 (459 aa).

4 positions are modified to phosphoserine; by LATS1 and LATS2: Ser21, Ser69, Ser87, and Ser119. Disordered regions lie at residues 51-88 (LPDS…AHSS) and 103-129 (SGMA…VPLP). 2 consecutive WW domains span residues 126–159 (VPLP…DPRK) and 186–219 (GPLP…DPRL). Disordered stretches follow at residues 231-254 (TQSA…MGGN) and 307-364 (PTSM…SSYS). Residues 247–459 (HGGVMGGNNQ…IDKESFLTWL (213 aa)) are transactivation domain. Composition is skewed to polar residues over residues 307–347 (PTSM…SGTY) and 355–364 (DSGLSMSSYS).

This sequence belongs to the YAP1 family. Post-translationally, phosphorylated by lats1 and lats2; leading to cytoplasmic translocation and inactivation. Ubiquitously expressed throughout development.

Its subcellular location is the cytoplasm. The protein resides in the nucleus. The protein localises to the cell junction. It localises to the tight junction. It is found in the cell membrane. Transcriptional regulator which can act both as a coactivator and a corepressor and is the critical downstream regulatory target in the Hippo signaling pathway that plays a pivotal role in organ size control and tumor suppression by restricting proliferation and promoting apoptosis. Plays a key role in tissue tension and 3D tissue shape by regulating cortical actomyosin network formation. This chain is Transcriptional coactivator YAP1, found in Oryzias latipes (Japanese rice fish).